Reading from the N-terminus, the 869-residue chain is Leucine--tRNA ligase (869 aa).

Residues 42–52 (PYPSGNLHMGH) carry the 'HIGH' region motif. A 'KMSKS' region motif is present at residues 622–626 (KMSKS). Lys625 serves as a coordination point for ATP.

This sequence belongs to the class-I aminoacyl-tRNA synthetase family.

The protein localises to the cytoplasm. It catalyses the reaction tRNA(Leu) + L-leucine + ATP = L-leucyl-tRNA(Leu) + AMP + diphosphate. The sequence is that of Leucine--tRNA ligase from Synechocystis sp. (strain ATCC 27184 / PCC 6803 / Kazusa).